The following is an 857-amino-acid chain: Protein translocase subunit SecA (857 aa).

Residues Q88, 106 to 110 (GEGKT), and D496 each bind ATP. Positions 833, 835, 844, and 845 each coordinate Zn(2+).

It belongs to the SecA family. Monomer and homodimer. Part of the essential Sec protein translocation apparatus which comprises SecA, SecYEG and auxiliary proteins SecDF-YajC and YidC. Requires Zn(2+) as cofactor.

The protein localises to the cell inner membrane. It is found in the cytoplasm. It carries out the reaction ATP + H2O + cellular proteinSide 1 = ADP + phosphate + cellular proteinSide 2.. Its function is as follows. Part of the Sec protein translocase complex. Interacts with the SecYEG preprotein conducting channel. Has a central role in coupling the hydrolysis of ATP to the transfer of proteins into and across the cell membrane, serving as an ATP-driven molecular motor driving the stepwise translocation of polypeptide chains across the membrane. The chain is Protein translocase subunit SecA from Sulfurimonas denitrificans (strain ATCC 33889 / DSM 1251) (Thiomicrospira denitrificans (strain ATCC 33889 / DSM 1251)).